Here is a 242-residue protein sequence, read N- to C-terminus: DNA repair protein RecO (242 aa).

It belongs to the RecO family.

Its function is as follows. Involved in DNA repair and RecF pathway recombination. The protein is DNA repair protein RecO of Bacteroides fragilis (strain ATCC 25285 / DSM 2151 / CCUG 4856 / JCM 11019 / LMG 10263 / NCTC 9343 / Onslow / VPI 2553 / EN-2).